The primary structure comprises 189 residues: Glycerol-3-phosphate acyltransferase (189 aa).

The next 4 helical transmembrane spans lie at 1-21, 79-99, 113-133, and 151-171; these read MVWLLAILAYLLGSLSFAILL, QQAWIGLAAVSGHLYPLYFNF, LGLYPPAVLPAVAAWLLVFAF, and LLAWRQPEALLPMLLLYGVIV.

Belongs to the PlsY family. As to quaternary structure, probably interacts with PlsX.

The protein localises to the cell inner membrane. The catalysed reaction is an acyl phosphate + sn-glycerol 3-phosphate = a 1-acyl-sn-glycero-3-phosphate + phosphate. Its pathway is lipid metabolism; phospholipid metabolism. Catalyzes the transfer of an acyl group from acyl-phosphate (acyl-PO(4)) to glycerol-3-phosphate (G3P) to form lysophosphatidic acid (LPA). This enzyme utilizes acyl-phosphate as fatty acyl donor, but not acyl-CoA or acyl-ACP. The sequence is that of Glycerol-3-phosphate acyltransferase from Azotobacter vinelandii (strain DJ / ATCC BAA-1303).